The primary structure comprises 316 residues: Acetyl-coenzyme A carboxylase carboxyl transferase subunit alpha (316 aa).

The 255-residue stretch at 39 to 293 (RLQDKSHALT…RQTLLAQLES (255 aa)) folds into the CoA carboxyltransferase C-terminal domain.

Belongs to the AccA family. Acetyl-CoA carboxylase is a heterohexamer composed of biotin carboxyl carrier protein (AccB), biotin carboxylase (AccC) and two subunits each of ACCase subunit alpha (AccA) and ACCase subunit beta (AccD).

It is found in the cytoplasm. It carries out the reaction N(6)-carboxybiotinyl-L-lysyl-[protein] + acetyl-CoA = N(6)-biotinyl-L-lysyl-[protein] + malonyl-CoA. Its pathway is lipid metabolism; malonyl-CoA biosynthesis; malonyl-CoA from acetyl-CoA: step 1/1. In terms of biological role, component of the acetyl coenzyme A carboxylase (ACC) complex. First, biotin carboxylase catalyzes the carboxylation of biotin on its carrier protein (BCCP) and then the CO(2) group is transferred by the carboxyltransferase to acetyl-CoA to form malonyl-CoA. The chain is Acetyl-coenzyme A carboxylase carboxyl transferase subunit alpha from Azotobacter vinelandii (strain DJ / ATCC BAA-1303).